Consider the following 157-residue polypeptide: Putative dehydration-responsive element-binding protein 2H (157 aa).

The short motif at 5–21 (RKSRGTRDVAEILRKWR) is the Nuclear localization signal element. A disordered region spans residues 29–57 (ADSCIDGGGSKPIRKAPPKRSRKGCMKGK). Residues 40 to 54 (PIRKAPPKRSRKGCM) show a composition bias toward basic residues. Residues 66 to 123 (DYTGVRQRTWGKWVAEIREPGRGAKLWLGTFSSSYEAALAYDEASKAIYGQSARLNLP) constitute a DNA-binding region (AP2/ERF).

This sequence belongs to the AP2/ERF transcription factor family. ERF subfamily.

The protein localises to the nucleus. In terms of biological role, putative transcriptional activator that binds specifically to the DNA sequence 5'-[AG]CCGAC-3'. The sequence is that of Putative dehydration-responsive element-binding protein 2H (DREB2H) from Arabidopsis thaliana (Mouse-ear cress).